Reading from the N-terminus, the 127-residue chain is Glycine cleavage system H protein (127 aa).

The 82-residue stretch at 24–105 folds into the Lipoyl-binding domain; it reads TALVGITDFA…YNEGWIVKMK (82 aa). Lysine 65 carries the N6-lipoyllysine modification.

The protein belongs to the GcvH family. The glycine cleavage system is composed of four proteins: P, T, L and H. It depends on (R)-lipoate as a cofactor.

In terms of biological role, the glycine cleavage system catalyzes the degradation of glycine. The H protein shuttles the methylamine group of glycine from the P protein to the T protein. This Chlorobaculum tepidum (strain ATCC 49652 / DSM 12025 / NBRC 103806 / TLS) (Chlorobium tepidum) protein is Glycine cleavage system H protein.